Here is a 722-residue protein sequence, read N- to C-terminus: Bifunctional UDP-N-acetylglucosamine 2-epimerase/N-acetylmannosamine kinase (722 aa).

Positions 19, 23, 113, 220, and 253 each coordinate UDP. CMP-N-acetyl-beta-neuraminate is bound by residues Lys-259, Glu-271, Lys-280, and His-281. Val-282, Ser-301, Ser-302, Glu-307, and Arg-321 together coordinate UDP. The N-acetylmannosamine kinase stretch occupies residues 406–722 (TLSALAVDLG…VLDYTTRRIH (317 aa)). Asp-413 contacts Mg(2+). Residue Gly-416 coordinates an N-acyl-D-mannosamine 6-phosphate. ADP is bound by residues Thr-417, Asn-418, and Arg-420. An N-acyl-D-mannosamine 6-phosphate is bound by residues Gly-476, Arg-477, Thr-489, Asn-516, Asp-517, and Gly-545. Gly-476, Arg-477, Thr-489, Asn-516, and Asp-517 together coordinate an N-acyl-D-mannosamine. Residue Asp-517 is part of the active site. An N-acyl-D-mannosamine-binding residues include Glu-566 and His-569. Residue His-569 coordinates an N-acyl-D-mannosamine 6-phosphate. The Zn(2+) site is built by His-569, Cys-579, Cys-581, and Cys-586. Glu-588 serves as a coordination point for an N-acyl-D-mannosamine 6-phosphate. Glu-588 is a binding site for an N-acyl-D-mannosamine.

The protein in the N-terminal section; belongs to the UDP-N-acetylglucosamine 2-epimerase family. In the C-terminal section; belongs to the ROK (NagC/XylR) family. As to quaternary structure, homodimer. Homotetramer. Homohexamer. The hexameric form exhibits both enzyme activities, whereas the dimeric form only catalyzes the phosphorylation of N-acyl-D-mannosamine. Post-translationally, phosphorylated. Phosphorylation by PKC activates the UDP-N-acetylglucosamine 2-epimerase activity. Widely expressed. Highest expression is observed in liver.

The protein resides in the cytoplasm. It localises to the cytosol. It carries out the reaction UDP-N-acetyl-alpha-D-glucosamine + H2O = aldehydo-N-acetyl-D-mannosamine + UDP + H(+). The enzyme catalyses an N-acyl-D-mannosamine + ATP = an N-acyl-D-mannosamine 6-phosphate + ADP + H(+). It participates in amino-sugar metabolism; N-acetylneuraminate biosynthesis. Its activity is regulated as follows. The UDP-N-acetylglucosamine 2-epimerase activity, in contrast to the N-acetylmannosamine kinase activity, exhibits allosteric regulation by cytidine monophosphate-N-acetylneuraminic acid (CMP-Neu5Ac), the end product of neuraminic acid biosynthesis. Moreover, the activity is contingent upon the oligomeric state of the enzyme. The monomeric form is inactive, while the dimeric form selectively catalyzes the phosphorylation of N-acetylmannosamine. The hexameric form, on the other hand, demonstrates full proficiency in both enzyme activities. Furthermore, the UDP-N-acetylglucosamine 2-epimerase activity is increased by PKC-mediated phosphorylation. Its function is as follows. Bifunctional enzyme that possesses both UDP-N-acetylglucosamine 2-epimerase and N-acetylmannosamine kinase activities, and serves as the initiator of the biosynthetic pathway leading to the production of N-acetylneuraminic acid (NeuAc), a critical precursor in the synthesis of sialic acids. By catalyzing this pivotal and rate-limiting step in sialic acid biosynthesis, this enzyme assumes a pivotal role in governing the regulation of cell surface sialylation. Sialic acids represent a category of negatively charged sugars that reside on the surface of cells as terminal components of glycoconjugates and mediate important functions in various cellular processes, including cell adhesion, signal transduction, and cellular recognition. The sequence is that of Bifunctional UDP-N-acetylglucosamine 2-epimerase/N-acetylmannosamine kinase from Rattus norvegicus (Rat).